The chain runs to 316 residues: ATP synthase gamma chain (316 aa).

Belongs to the ATPase gamma chain family. In terms of assembly, F-type ATPases have 2 components, CF(1) - the catalytic core - and CF(0) - the membrane proton channel. CF(1) has five subunits: alpha(3), beta(3), gamma(1), delta(1), epsilon(1). CF(0) has three main subunits: a, b and c.

Its subcellular location is the cellular thylakoid membrane. In terms of biological role, produces ATP from ADP in the presence of a proton gradient across the membrane. The gamma chain is believed to be important in regulating ATPase activity and the flow of protons through the CF(0) complex. The polypeptide is ATP synthase gamma chain (Synechococcus sp. (strain CC9605)).